Here is a 162-residue protein sequence, read N- to C-terminus: Ribosomal RNA large subunit methyltransferase H (162 aa).

An S-adenosyl-L-methionine-binding site is contributed by G108.

The protein belongs to the RNA methyltransferase RlmH family. In terms of assembly, homodimer.

Its subcellular location is the cytoplasm. It carries out the reaction pseudouridine(1915) in 23S rRNA + S-adenosyl-L-methionine = N(3)-methylpseudouridine(1915) in 23S rRNA + S-adenosyl-L-homocysteine + H(+). Functionally, specifically methylates the pseudouridine at position 1915 (m3Psi1915) in 23S rRNA. This Methylobacterium sp. (strain 4-46) protein is Ribosomal RNA large subunit methyltransferase H.